The chain runs to 207 residues: Outer-membrane lipoprotein LolB (207 aa).

The first 21 residues, 1-21 (MTLPDFRLIRLLPLASLVLTA), serve as a signal peptide directing secretion. Residue cysteine 22 is the site of N-palmitoyl cysteine attachment. Residue cysteine 22 is the site of S-diacylglycerol cysteine attachment.

Belongs to the LolB family. As to quaternary structure, monomer.

Its subcellular location is the cell outer membrane. Functionally, plays a critical role in the incorporation of lipoproteins in the outer membrane after they are released by the LolA protein. This is Outer-membrane lipoprotein LolB from Salmonella agona (strain SL483).